The sequence spans 350 residues: 3-methylornithine synthase (350 aa).

Positions Asn57 to Asp279 constitute a Radical SAM core domain. 2 residues coordinate [4Fe-4S] cluster: Cys71 and Cys75. Phe77 is a binding site for S-adenosyl-L-methionine. Cys78 serves as a coordination point for [4Fe-4S] cluster. (3R)-3-methyl-D-ornithine is bound by residues Asp112, Ser146, and Tyr169. Residues Glu171, Arg182, and Arg190 each coordinate S-adenosyl-L-methionine. Arg235 is a binding site for (3R)-3-methyl-D-ornithine. Residues Leu240 and Gln242 each coordinate S-adenosyl-L-methionine. Positions 277, 298, and 299 each coordinate (3R)-3-methyl-D-ornithine.

Belongs to the radical SAM superfamily. PylB family. Requires [4Fe-4S] cluster as cofactor. S-adenosyl-L-methionine serves as cofactor.

It catalyses the reaction L-lysine = (3R)-3-methyl-D-ornithine. The protein operates within amino-acid biosynthesis; L-pyrrolysine biosynthesis. Catalyzes the isomerization of L-lysine to (3R)-3-methyl-D-ornithine via a radical-based mechanism, a step in the biosynthesis pathway of pyrrolysine. Also catalyzes the reverse reaction in vitro, converting (3R)-3-methyl-D-ornithine into L-lysine. The protein is 3-methylornithine synthase of Methanosarcina barkeri (strain Fusaro / DSM 804).